Reading from the N-terminus, the 223-residue chain is uncharacterized protein (223 aa).

Positions 29–220 (KQTYKMFKED…AKEILKNIGD (192 aa)) constitute a Tyr recombinase domain. Residues Arg71, Lys103, His170, Arg173, and His196 contribute to the active site. Tyr205 serves as the catalytic O-(3'-phospho-DNA)-tyrosine intermediate.

It belongs to the 'phage' integrase family.

This is an uncharacterized protein from Methanocaldococcus jannaschii (strain ATCC 43067 / DSM 2661 / JAL-1 / JCM 10045 / NBRC 100440) (Methanococcus jannaschii).